The following is a 146-amino-acid chain: Ribonuclease H (146 aa).

One can recognise an RNase H type-1 domain in the interval 1–143; sequence MQKKVTIYTD…CDYLATQAIK (143 aa). Residues D10, E48, D70, and D135 each coordinate Mg(2+).

This sequence belongs to the RNase H family. In terms of assembly, monomer. Mg(2+) is required as a cofactor.

Its subcellular location is the cytoplasm. It carries out the reaction Endonucleolytic cleavage to 5'-phosphomonoester.. Its function is as follows. Endonuclease that specifically degrades the RNA of RNA-DNA hybrids. The sequence is that of Ribonuclease H from Chlorobium phaeobacteroides (strain BS1).